The following is a 357-amino-acid chain: S-adenosylmethionine:tRNA ribosyltransferase-isomerase (357 aa).

It belongs to the QueA family. In terms of assembly, monomer.

It localises to the cytoplasm. It catalyses the reaction 7-aminomethyl-7-carbaguanosine(34) in tRNA + S-adenosyl-L-methionine = epoxyqueuosine(34) in tRNA + adenine + L-methionine + 2 H(+). Its pathway is tRNA modification; tRNA-queuosine biosynthesis. Transfers and isomerizes the ribose moiety from AdoMet to the 7-aminomethyl group of 7-deazaguanine (preQ1-tRNA) to give epoxyqueuosine (oQ-tRNA). The chain is S-adenosylmethionine:tRNA ribosyltransferase-isomerase from Buchnera aphidicola subsp. Acyrthosiphon pisum (strain APS) (Acyrthosiphon pisum symbiotic bacterium).